The following is a 156-amino-acid chain: Transcriptional repressor NrdR (156 aa).

A zinc finger spans residues 3–34 (CPFCSETDTKVIDSRLVADGAQVRRRRECLTC). Residues 49–139 (PRVIKQDGTR…VYRSFQDLSE (91 aa)) form the ATP-cone domain.

This sequence belongs to the NrdR family. Zn(2+) serves as cofactor.

In terms of biological role, negatively regulates transcription of bacterial ribonucleotide reductase nrd genes and operons by binding to NrdR-boxes. The protein is Transcriptional repressor NrdR of Saccharophagus degradans (strain 2-40 / ATCC 43961 / DSM 17024).